Consider the following 133-residue polypeptide: Osteocrin (133 aa).

An N-terminal signal peptide occupies residues 1-27 (MLDWRLASAHFILAVTLTLWSSGKVLS). Arginine amide is present on Arg132.

Belongs to the Osteocrin family. In terms of assembly, interacts with NPR3. In terms of tissue distribution, enriched in neocortical regions of the developing cerebral cortex. Not expressed in other compartments of the neocortical wall or in brain regions such as the hippocampus, striatum, mediodorsal nucleus of the thalamus and cerebellum. Also expressed in bone. In developing neonatal rib bone, present at high level in osteoblasts on bone-forming surfaces, in newly incorporated osteocytes and in some late hypertrophic chondrocytes (at protein level). In adult bone, localizes specifically to osteoblasts and young osteocytes at bone-forming sites (at protein level).

It localises to the secreted. Its function is as follows. Hormone that acts as a regulator of dendritic growth in the developing cerebral cortex in response to sensory experience. Induced in the brain following membrane depolarization and inhibits dendritic branching in neurons of the developing cortex. Probably acts by binding to natriuretic peptide receptor NPR3/NPR-C, thereby preventing binding between NPR3/NPR-C and natriuretic peptides, leading to increase cGMP production. The polypeptide is Osteocrin (Homo sapiens (Human)).